The following is a 378-amino-acid chain: MTAQTSAVSVISAANRLVAKVGSSLVTNEGRGLDRAAVDHWAAQIAALHQQGKQVVLVSSGAIAEGMARLGWRKRPSAMHELQAAAAVGQMGLCQAYEAAFAEFGLRTAQILLTHEDLADRHRYLNARSTLFALLRLGVVPIVNENDTVVTDEIRFGDNDTLGALVTNLIEADALIILTDQRGLYEADPRCDPAARFVAHAQAGDAALEAMAGGAGSGVGTGGMLTKILAAKRAAHSGAHTVIASGRERNVLTRLAQGECIGTELRAVLPVWSARKQWLADHLRLRGRVVLDDGAVHALLHEGKSLLPIGVAEVQGEFERGDVVACVDMHGRECARGLINYSSADTRRILRQPSSQIARILGSMTDPELMHRDNLVVT.

ATP is bound at residue K20. Residues S60, D147, and N159 each contribute to the substrate site. ATP contacts are provided by residues 179 to 180 and 221 to 227; these read TD and TGGMLTK. The PUA domain maps to 286-364; the sequence is RGRVVLDDGA…SQIARILGSM (79 aa).

Belongs to the glutamate 5-kinase family.

The protein localises to the cytoplasm. It catalyses the reaction L-glutamate + ATP = L-glutamyl 5-phosphate + ADP. The protein operates within amino-acid biosynthesis; L-proline biosynthesis; L-glutamate 5-semialdehyde from L-glutamate: step 1/2. Its function is as follows. Catalyzes the transfer of a phosphate group to glutamate to form L-glutamate 5-phosphate. This Bordetella parapertussis (strain 12822 / ATCC BAA-587 / NCTC 13253) protein is Glutamate 5-kinase.